The primary structure comprises 331 residues: Fructose-1,6-bisphosphatase class 1 (331 aa).

Mg(2+) is bound by residues glutamate 100, aspartate 120, leucine 122, and aspartate 123. Substrate contacts are provided by residues 123 to 126 (DGSS), asparagine 216, tyrosine 243, 261 to 263 (YLY), and lysine 273. Glutamate 279 contacts Mg(2+).

Belongs to the FBPase class 1 family. Homotetramer. Mg(2+) serves as cofactor.

The protein localises to the cytoplasm. It carries out the reaction beta-D-fructose 1,6-bisphosphate + H2O = beta-D-fructose 6-phosphate + phosphate. It functions in the pathway carbohydrate biosynthesis; gluconeogenesis. This chain is Fructose-1,6-bisphosphatase class 1, found in Amoebophilus asiaticus (strain 5a2).